We begin with the raw amino-acid sequence, 243 residues long: GTP cyclohydrolase 1 (243 aa).

At T15 the chain carries Phosphothreonine. Positions 18 to 55 are disordered; that stretch reads NIRPTSPYTLNPPVERDGFSWPSVGTRQRAEETEEEEK. Position 23 is a phosphoserine (S23). The Zn(2+) site is built by C132, H135, and C203.

The protein belongs to the GTP cyclohydrolase I family. Homodimer.

The enzyme catalyses GTP + H2O = 7,8-dihydroneopterin 3'-triphosphate + formate + H(+). It participates in cofactor biosynthesis; 7,8-dihydroneopterin triphosphate biosynthesis; 7,8-dihydroneopterin triphosphate from GTP: step 1/1. Functionally, GTP cyclohydrolase 1 is the first enzyme in the biosynthetic pathway leading to folic acid. The protein is GTP cyclohydrolase 1 of Saccharomyces cerevisiae (strain ATCC 204508 / S288c) (Baker's yeast).